Reading from the N-terminus, the 294-residue chain is Ribosomal RNA small subunit methyltransferase H (294 aa).

S-adenosyl-L-methionine contacts are provided by residues 40-42, D59, F86, D102, and Q109; that span reads GGH.

Belongs to the methyltransferase superfamily. RsmH family.

The protein localises to the cytoplasm. The enzyme catalyses cytidine(1402) in 16S rRNA + S-adenosyl-L-methionine = N(4)-methylcytidine(1402) in 16S rRNA + S-adenosyl-L-homocysteine + H(+). Specifically methylates the N4 position of cytidine in position 1402 (C1402) of 16S rRNA. This is Ribosomal RNA small subunit methyltransferase H from Cyanothece sp. (strain PCC 7425 / ATCC 29141).